The sequence spans 142 residues: Hemoglobin subunit alpha-A (142 aa).

Residues 2–142 (VLSAADKTNV…VGTVLTAKYR (141 aa)) enclose the Globin domain. Position 59 (H59) interacts with O2. H88 lines the heme b pocket.

Belongs to the globin family. In terms of assembly, heterotetramer of two alpha chains and two beta chains. As to expression, red blood cells.

Its function is as follows. Involved in oxygen transport from the lung to the various peripheral tissues. The polypeptide is Hemoglobin subunit alpha-A (HBAA) (Anser indicus (Bar-headed goose)).